The sequence spans 900 residues: Isoleucine--tRNA ligase (900 aa).

Positions 59-69 (PYANGNIHMGH) match the 'HIGH' region motif. Residue glutamate 550 participates in L-isoleucyl-5'-AMP binding. Residues 591–595 (KMSKS) carry the 'KMSKS' region motif. Lysine 594 contacts ATP. Zn(2+) is bound by residues cysteine 876, cysteine 879, cysteine 892, and cysteine 895.

Belongs to the class-I aminoacyl-tRNA synthetase family. IleS type 1 subfamily. In terms of assembly, monomer. Zn(2+) is required as a cofactor.

Its subcellular location is the cytoplasm. The catalysed reaction is tRNA(Ile) + L-isoleucine + ATP = L-isoleucyl-tRNA(Ile) + AMP + diphosphate. In terms of biological role, catalyzes the attachment of isoleucine to tRNA(Ile). As IleRS can inadvertently accommodate and process structurally similar amino acids such as valine, to avoid such errors it has two additional distinct tRNA(Ile)-dependent editing activities. One activity is designated as 'pretransfer' editing and involves the hydrolysis of activated Val-AMP. The other activity is designated 'posttransfer' editing and involves deacylation of mischarged Val-tRNA(Ile). This Onion yellows phytoplasma (strain OY-M) protein is Isoleucine--tRNA ligase.